We begin with the raw amino-acid sequence, 415 residues long: ATP-dependent RNA helicase RhlB (415 aa).

A Q motif motif is present at residues 9 to 37 (QRFSALPLHPIVRGALAKKGFDFCTPIQA). The region spanning 40–218 (LPISLNGRDV…FEDMNDPEYI (179 aa)) is the Helicase ATP-binding domain. 53–60 (AQTGTGKT) is a binding site for ATP. The short motif at 164–167 (DEAD) is the DEAD box element. In terms of domain architecture, Helicase C-terminal spans 241 to 389 (DKMALLLTLM…VSQYETEALL (149 aa)).

It belongs to the DEAD box helicase family. RhlB subfamily. In terms of assembly, component of the RNA degradosome, which is a multiprotein complex involved in RNA processing and mRNA degradation.

It localises to the cytoplasm. The enzyme catalyses ATP + H2O = ADP + phosphate + H(+). Functionally, DEAD-box RNA helicase involved in RNA degradation. Has RNA-dependent ATPase activity and unwinds double-stranded RNA. This chain is ATP-dependent RNA helicase RhlB, found in Haemophilus influenzae (strain PittGG).